Consider the following 359-residue polypeptide: Mitochondrial glutathione transporter SLC25A39 (359 aa).

At 1-14 (MDDQDPGGISPLQQ) the chain is on the mitochondrial intermembrane side. Solcar repeat units lie at residues 9-151 (ISPL…LKAF), 159-243 (SDLY…VKSW), and 253-347 (TSVG…GKSF). A helical transmembrane segment spans residues 15 to 35 (MVASGAGAVVTSLFMTPLDVV). At 36–121 (KVRLQSQRPS…VKIVRHEGTR (86 aa)) the chain is on the mitochondrial matrix side. [2Fe-2S] cluster-binding residues include cysteine 74, cysteine 78, cysteine 88, and cysteine 94. The helical transmembrane segment at 122-142 (TLWSGLPATLVMTVPATAIYF) threads the bilayer. Over 143–164 (TAYDQLKAFLCGQSLTSDLYAP) the chain is Mitochondrial intermembrane. A helical membrane pass occupies residues 165-185 (MVAGALARMGTVTVVSPLELV). The Mitochondrial matrix portion of the chain corresponds to 186–214 (RTKLQAQHVSYRELASSVQAAVTQGGWRS). The chain crosses the membrane as a helical span at residues 215-235 (LWLGWGPTALRDVPFSALYWF). The Mitochondrial intermembrane portion of the chain corresponds to 236–255 (NYELVKSWLSGLRPKDQTSV). A helical membrane pass occupies residues 256–276 (GISFVAGGISGMVAATLTLPF). The Mitochondrial matrix portion of the chain corresponds to 277-317 (DVVKTQRQMSLGAVEAVRVKPPRVDSTWLLLRRIRAESGTR). The chain crosses the membrane as a helical span at residues 318-338 (GLFAGFLPRIIKAAPSCAIMI). At 339–359 (STYEFGKSFFQRLNQEQPLGR) the chain is on the mitochondrial intermembrane side.

This sequence belongs to the mitochondrial carrier (TC 2.A.29) family. Post-translationally, cleaved and degraded by AFG3L2; degradation by AFG3L2 is regulated by the ability of SLC25A39 to bind iron-sulfur. In absence of mitochondrial glutathione, SLC25A39 binds iron-sulfur, preventing cleavage and degradation by AFG3L2. The presence of mitochondrial glutathione prevents iron-sulfur-binding to SLC25A39, promoting cleavage and degradation by AFG3L2. Abundant expression in bone marrow, spleen, testis and kidney.

The protein resides in the mitochondrion inner membrane. It carries out the reaction glutathione(in) = glutathione(out). With respect to regulation, the activity of SLC25A39 is regulated by levels of mitochondrial glutathione via its ability to bind [2Fe-2S] iron-sulfur cluster. Upon physiological levels of mitochondrial glutathione, glutathione prevents iron-sulfur-binding to SLC25A39 promoting cleavage and degradation by AFG3L2. Upon depletion of mitochondrial glutathione, SLC25A39 binds iron-sulfur, preventing cleavage and degradation by AFG3L2. In terms of biological role, mitochondrial transporter required for glutathione import into mitochondria. Glutathione, which plays key roles in oxidative metabolism, is produced exclusively in the cytosol and is imported in many organelles. Mitochondrial glutathione is required for the activity and stability of proteins containing iron-sulfur clusters, as well as erythropoiesis. The protein is Mitochondrial glutathione transporter SLC25A39 of Mus musculus (Mouse).